The following is a 355-amino-acid chain: NAD-dependent protein deacylase sirtuin-6 (355 aa).

N-acetylserine is present on Ser-2. Ser-10 carries the phosphoserine modification. The region spanning 27 to 272 (PEELERKVWE…TQLMKHLGLE (246 aa)) is the Deacetylase sirtuin-type domain. N6-acetyllysine is present on Lys-33. NAD(+) is bound by residues Ala-53, Thr-57, Phe-64, Arg-65, Trp-71, Gln-113, and His-133. Residue His-133 is the Proton acceptor of the active site. Positions 141, 144, and 166 each coordinate Zn(2+). Lys-170 participates in a covalent cross-link: Glycyl lysine isopeptide (Lys-Gly) (interchain with G-Cter in ubiquitin). Residue Cys-177 coordinates Zn(2+). 5 residues coordinate NAD(+): Gly-214, Ser-216, Asn-240, Gln-242, and Val-258. Positions 284-355 (KALPPLPRPP…KRVKAEVTPS (72 aa)) are disordered. Over residues 287–296 (PPLPRPPTPK) the composition is skewed to pro residues. Thr-294 carries the phosphothreonine modification. 2 positions are modified to phosphoserine: Ser-303 and Ser-330.

Belongs to the sirtuin family. Class IV subfamily. In terms of assembly, homodimer; binds to nucleosomes and DNA ends as a homodimer. Interacts with RELA; interferes with RELA binding to target DNA. Interacts with SMARCA5; promoting recruitment of SMARCA5/SNF2H to double-strand breaks (DSBs) sites. Interacts with the mTORC2 complex; preventing the ability of SIRT6 to deacetylate FOXO1. Interacts with the CLOCK-BMAL1 complex; recruited by the CLOCK-BMAL1 complex to regulate expression of clock-controlled genes. Interacts with CSNK2A2; preventing CSNK2A2 localization to the nucleus. In terms of processing, acetylated at Lys-33. Deacetylation at Lys-33 by SIRT1 promotes homomultimerization and binding to double-strand breaks (DSBs) sites. Phosphorylation at Ser-10 by MAPK8/JNK1 in response to oxidative stress stimulates the mono-ADP-ribosyltransferase activity on PARP1, leading to PARP1 recruitment to double-strand breaks (DSBs). Post-translationally, monoubiquitinated at Lys-170 by STUB1/CHIP, preventing its degradation by the proteasome. In terms of processing, sumoylated, leading to specifically decrease ability to deacetylate histone H3 at 'Lys-56' (H3K56ac).

Its subcellular location is the nucleus. The protein localises to the chromosome. It localises to the telomere. It is found in the endoplasmic reticulum. It catalyses the reaction N(6)-acetyl-L-lysyl-[protein] + NAD(+) + H2O = 2''-O-acetyl-ADP-D-ribose + nicotinamide + L-lysyl-[protein]. The enzyme catalyses N(6)-tetradecanoyl-L-lysyl-[protein] + NAD(+) + H2O = 2''-O-tetradecanoyl-ADP-D-ribose + nicotinamide + L-lysyl-[protein]. The catalysed reaction is N(6)-hexadecanoyl-L-lysyl-[protein] + NAD(+) + H2O = 2''-O-hexadecanoyl-ADP-D-ribose + nicotinamide + L-lysyl-[protein]. It carries out the reaction L-lysyl-[protein] + NAD(+) = N(6)-(ADP-D-ribosyl)-L-lysyl-[protein] + nicotinamide + H(+). It catalyses the reaction L-arginyl-[protein] + NAD(+) = N(omega)-(ADP-D-ribosyl)-L-arginyl-[protein] + nicotinamide + H(+). Compared to the defatty-acylase activity, the protein deacetylase activity is weak in vitro, and requires activation. The histone deacetylase activity is strongly activated upon binding to nucleosomes and chromatin in vivo. Two molecules of SIRT6 associate with the acidic patch of one nucleosome, while the C-terminal disordered region of SIRT6 associates with nucleosomal DNA, leading to efficient histone deacetylation. The protein-lysine deacetylase activity is also activated by long-chain free fatty-acids. NAD-dependent protein deacetylase, deacylase and mono-ADP-ribosyltransferase that plays an essential role in DNA damage repair, telomere maintenance, metabolic homeostasis, inflammation, tumorigenesis and aging. Displays protein-lysine deacetylase or defatty-acylase (demyristoylase and depalmitoylase) activity, depending on the context. Acts as a key histone deacetylase by catalyzing deacetylation of histone H3 at 'Lys-9', 'Lys-18' and 'Lys-56' (H3K9ac, H3K18ac and H3K56ac, respectively), suppressing target gene expression of several transcription factors, including NF-kappa-B. Acts as an inhibitor of transcription elongation by mediating deacetylation of H3K9ac and H3K56ac, preventing release of NELFE from chromatin and causing transcriptional pausing. Involved in DNA repair by promoting double-strand break (DSB) repair: acts as a DSB sensor by recognizing and binding DSB sites, leading to (1) recruitment of DNA repair proteins, such as SMARCA5/SNF2H, and (2) deacetylation of histone H3K9ac and H3K56ac. SIRT6 participation to DSB repair is probably involved in extension of life span. Also promotes DNA repair by deacetylating non-histone proteins, such as DDB2 and p53/TP53. Specifically deacetylates H3K18ac at pericentric heterochromatin, thereby maintaining pericentric heterochromatin silencing at centromeres and protecting against genomic instability and cellular senescence. Involved in telomere maintenance by catalyzing deacetylation of histone H3 in telomeric chromatin, regulating telomere position effect and telomere movement in response to DNA damage. Required for embryonic stem cell differentiation by mediating histone deacetylation of H3K9ac. Plays a major role in metabolism by regulating processes such as glycolysis, gluconeogenesis, insulin secretion and lipid metabolism. Inhibits glycolysis via histone deacetylase activity and by acting as a corepressor of the transcription factor HIF1A, thereby controlling the expression of multiple glycolytic genes. Has tumor suppressor activity by repressing glycolysis, thereby inhibiting the Warburg effect. Also regulates glycolysis and tumorigenesis by mediating deacetylation and nuclear export of non-histone proteins, such as isoform M2 of PKM (PKM2). Acts as a negative regulator of gluconeogenesis by mediating deacetylation of non-histone proteins, such as FOXO1 and KAT2A/GCN5. Promotes beta-oxidation of fatty acids during fasting by catalyzing deacetylation of NCOA2, inducing coactivation of PPARA. Acts as a regulator of lipid catabolism in brown adipocytes, both by catalyzing deacetylation of histones and non-histone proteins, such as FOXO1. Also acts as a regulator of circadian rhythms, both by regulating expression of clock-controlled genes involved in lipid and carbohydrate metabolism, and by catalyzing deacetylation of PER2. The defatty-acylase activity is specifically involved in regulation of protein secretion. Has high activity toward long-chain fatty acyl groups and mediates protein-lysine demyristoylation and depalmitoylation of target proteins, such as RRAS2 and TNF, thereby regulating their secretion. Also acts as a mono-ADP-ribosyltransferase by mediating mono-ADP-ribosylation of PARP1, TRIM28/KAP1 or SMARCC2/BAF170. Mono-ADP-ribosyltransferase activity is involved in DNA repair, cellular senescence, repression of LINE-1 retrotransposon elements and regulation of transcription. In Castor canadensis (American beaver), this protein is NAD-dependent protein deacylase sirtuin-6.